The primary structure comprises 197 residues: FMN-dependent NADH:quinone oxidoreductase (197 aa).

Residues Ser10, Ser16–Ser18, Met93–Phe96, and Thr137–Gly140 contribute to the FMN site.

This sequence belongs to the azoreductase type 1 family. In terms of assembly, homodimer. FMN is required as a cofactor.

It catalyses the reaction 2 a quinone + NADH + H(+) = 2 a 1,4-benzosemiquinone + NAD(+). The catalysed reaction is N,N-dimethyl-1,4-phenylenediamine + anthranilate + 2 NAD(+) = 2-(4-dimethylaminophenyl)diazenylbenzoate + 2 NADH + 2 H(+). In terms of biological role, quinone reductase that provides resistance to thiol-specific stress caused by electrophilic quinones. Its function is as follows. Also exhibits azoreductase activity. Catalyzes the reductive cleavage of the azo bond in aromatic azo compounds to the corresponding amines. In Shewanella denitrificans (strain OS217 / ATCC BAA-1090 / DSM 15013), this protein is FMN-dependent NADH:quinone oxidoreductase.